Reading from the N-terminus, the 406-residue chain is DNA repair protein RAD55 (406 aa).

43-50 provides a ligand contact to ATP; the sequence is GPPGIGKT. The interval 385–406 is disordered; the sequence is DSNDNPLPNAEGKEEIIYDSEG.

Belongs to the RecA family. RAD55 subfamily.

It is found in the nucleus. Functionally, required for radiation resistance and meiotic viability and presumably acts in recombination and recombinational DNA repair pathways. The sequence is that of DNA repair protein RAD55 (RAD55) from Saccharomyces cerevisiae (strain ATCC 204508 / S288c) (Baker's yeast).